The primary structure comprises 126 residues: uncharacterized protein (126 aa).

Residues 1-27 are disordered; that stretch reads MSKSKTPNFDDMEVLDDTNDEYDDSES. The segment covering 10-27 has biased composition (acidic residues); it reads DDMEVLDDTNDEYDDSES.

This is an uncharacterized protein from Halorubrum sp. PV6 (HRPV-1).